A 629-amino-acid chain; its full sequence is LEAF RUST 10 DISEASE-RESISTANCE LOCUS RECEPTOR-LIKE PROTEIN KINASE-like 1.1 (629 aa).

The first 19 residues, 1-19 (METVSVLLFFFLFLLAAEA), serve as a signal peptide directing secretion. At 20–225 (RSTKRTGCKD…PNNYHAEMRL (206 aa)) the chain is on the extracellular side. 6 N-linked (GlcNAc...) asparagine glycosylation sites follow: N56, N92, N123, N124, N172, and N177. The helical transmembrane segment at 226-246 (GLGIGGSVILIIILVALFAVI) threads the bilayer. The Cytoplasmic portion of the chain corresponds to 247-629 (HRNYRRKDGS…TTPNTSAYEF (383 aa)). Positions 291–565 (FSKDRLLGDG…TMEQVVHELK (275 aa)) constitute a Protein kinase domain. Residues 297-305 (LGDGGFGTV) and K319 contribute to the ATP site. Phosphotyrosine is present on Y365. The active-site Proton acceptor is the D416. The residue at position 449 (S449) is a Phosphoserine. Residues T450 and T455 each carry the phosphothreonine modification. Y463 carries the phosphotyrosine modification. Residues 609–629 (VSVTDQWTSKSTTPNTSAYEF) form a disordered region.

Belongs to the protein kinase superfamily. Ser/Thr protein kinase family.

It localises to the cell membrane. The catalysed reaction is L-seryl-[protein] + ATP = O-phospho-L-seryl-[protein] + ADP + H(+). It catalyses the reaction L-threonyl-[protein] + ATP = O-phospho-L-threonyl-[protein] + ADP + H(+). The protein is LEAF RUST 10 DISEASE-RESISTANCE LOCUS RECEPTOR-LIKE PROTEIN KINASE-like 1.1 of Arabidopsis thaliana (Mouse-ear cress).